Consider the following 937-residue polypeptide: Leucine--tRNA ligase (937 aa).

A 'HIGH' region motif is present at residues 34-44 (PYPSGAMHIGH). A 'KMSKS' region motif is present at residues 609 to 613 (KMSSS).

Belongs to the class-I aminoacyl-tRNA synthetase family.

It localises to the cytoplasm. It carries out the reaction tRNA(Leu) + L-leucine + ATP = L-leucyl-tRNA(Leu) + AMP + diphosphate. The sequence is that of Leucine--tRNA ligase from Methanothermobacter thermautotrophicus (strain ATCC 29096 / DSM 1053 / JCM 10044 / NBRC 100330 / Delta H) (Methanobacterium thermoautotrophicum).